A 178-amino-acid chain; its full sequence is Crossover junction endodeoxyribonuclease RuvC (178 aa).

Catalysis depends on residues Asp-14, Glu-73, and Asp-145. Asp-14, Glu-73, and Asp-145 together coordinate Mg(2+).

This sequence belongs to the RuvC family. As to quaternary structure, homodimer which binds Holliday junction (HJ) DNA. The HJ becomes 2-fold symmetrical on binding to RuvC with unstacked arms; it has a different conformation from HJ DNA in complex with RuvA. In the full resolvosome a probable DNA-RuvA(4)-RuvB(12)-RuvC(2) complex forms which resolves the HJ. Requires Mg(2+) as cofactor.

It is found in the cytoplasm. It carries out the reaction Endonucleolytic cleavage at a junction such as a reciprocal single-stranded crossover between two homologous DNA duplexes (Holliday junction).. Its function is as follows. The RuvA-RuvB-RuvC complex processes Holliday junction (HJ) DNA during genetic recombination and DNA repair. Endonuclease that resolves HJ intermediates. Cleaves cruciform DNA by making single-stranded nicks across the HJ at symmetrical positions within the homologous arms, yielding a 5'-phosphate and a 3'-hydroxyl group; requires a central core of homology in the junction. The consensus cleavage sequence is 5'-(A/T)TT(C/G)-3'. Cleavage occurs on the 3'-side of the TT dinucleotide at the point of strand exchange. HJ branch migration catalyzed by RuvA-RuvB allows RuvC to scan DNA until it finds its consensus sequence, where it cleaves and resolves the cruciform DNA. The sequence is that of Crossover junction endodeoxyribonuclease RuvC from Nitrosomonas eutropha (strain DSM 101675 / C91 / Nm57).